Reading from the N-terminus, the 83-residue chain is MSELIQQIVQVLKEQVVQDTVVPRNIRRAAEQAIEVLLDESRDPAVRAADAIAILEEISEDPNMPMHTRTIIWEVLGALEQVK.

This sequence belongs to the UPF0147 family.

In Thermococcus kodakarensis (strain ATCC BAA-918 / JCM 12380 / KOD1) (Pyrococcus kodakaraensis (strain KOD1)), this protein is UPF0147 protein TK2131.